A 393-amino-acid polypeptide reads, in one-letter code: Formate-dependent phosphoribosylglycinamide formyltransferase (393 aa).

N(1)-(5-phospho-beta-D-ribosyl)glycinamide is bound by residues 22 to 23 (EL) and Glu-82. ATP-binding positions include Arg-114, Lys-155, 160–165 (SSGKGQ), 195–198 (EGFI), and Glu-203. The ATP-grasp domain occupies 119 to 308 (RLAAEELKLP…QFALHARAIL (190 aa)). Mg(2+)-binding residues include Glu-267 and Glu-279. Residues Asp-286, Lys-356, and 363–364 (RR) each bind N(1)-(5-phospho-beta-D-ribosyl)glycinamide.

The protein belongs to the PurK/PurT family. In terms of assembly, homodimer.

It catalyses the reaction N(1)-(5-phospho-beta-D-ribosyl)glycinamide + formate + ATP = N(2)-formyl-N(1)-(5-phospho-beta-D-ribosyl)glycinamide + ADP + phosphate + H(+). Its pathway is purine metabolism; IMP biosynthesis via de novo pathway; N(2)-formyl-N(1)-(5-phospho-D-ribosyl)glycinamide from N(1)-(5-phospho-D-ribosyl)glycinamide (formate route): step 1/1. Involved in the de novo purine biosynthesis. Catalyzes the transfer of formate to 5-phospho-ribosyl-glycinamide (GAR), producing 5-phospho-ribosyl-N-formylglycinamide (FGAR). Formate is provided by PurU via hydrolysis of 10-formyl-tetrahydrofolate. The chain is Formate-dependent phosphoribosylglycinamide formyltransferase from Pseudomonas syringae pv. syringae (strain B728a).